The sequence spans 347 residues: Isopentenyl-diphosphate delta-isomerase (347 aa).

Residue arginine 9 to lysine 10 coordinates substrate. Residues serine 67, serine 68–threonine 70, serine 98, and asparagine 127 contribute to the FMN site. Serine 98–arginine 100 serves as a coordination point for substrate. Glutamine 162 lines the substrate pocket. Glutamate 163 is a Mg(2+) binding site. Residues lysine 194, threonine 224, glycine 274–arginine 276, and alanine 295–alanine 296 each bind FMN.

Belongs to the IPP isomerase type 2 family. Homooctamer. Dimer of tetramers. FMN serves as cofactor. NADPH is required as a cofactor. The cofactor is Mg(2+).

It is found in the cytoplasm. It carries out the reaction isopentenyl diphosphate = dimethylallyl diphosphate. Involved in the biosynthesis of isoprenoids. Catalyzes the 1,3-allylic rearrangement of the homoallylic substrate isopentenyl (IPP) to its allylic isomer, dimethylallyl diphosphate (DMAPP). This Cronobacter sakazakii (strain ATCC BAA-894) (Enterobacter sakazakii) protein is Isopentenyl-diphosphate delta-isomerase.